The following is a 267-amino-acid chain: Hydroxynaphthalene reductase-like protein Arp2 (267 aa).

NADP(+) contacts are provided by Ile-25, Asn-45, Asp-71, and Asn-98. Residues Ser-147 and Ser-148 each act as proton donor in the active site. NADP(+)-binding residues include Tyr-162, Lys-166, Val-195, and Thr-197. Tyr-162 serves as the catalytic Proton acceptor. The Lowers pKa of active site Tyr role is filled by Lys-166.

The protein belongs to the short-chain dehydrogenases/reductases (SDR) family.

In terms of biological role, hydroxynaphthalene reductase-like protein; part of the Pks2 gene cluster that mediates the formation of infectious structures (appressoria), enabling these fungi to kill insects faster. The product of the Pks2 gene cluster is different from the one of Pks1 and has still not been identified. The protein is Hydroxynaphthalene reductase-like protein Arp2 of Metarhizium acridum (strain CQMa 102).